We begin with the raw amino-acid sequence, 199 residues long: Fe/S biogenesis protein NfuA (199 aa).

Positions 151 and 154 each coordinate [4Fe-4S] cluster.

This sequence belongs to the NfuA family. Homodimer. It depends on [4Fe-4S] cluster as a cofactor.

Its function is as follows. Involved in iron-sulfur cluster biogenesis. Binds a 4Fe-4S cluster, can transfer this cluster to apoproteins, and thereby intervenes in the maturation of Fe/S proteins. Could also act as a scaffold/chaperone for damaged Fe/S proteins. In Xanthomonas oryzae pv. oryzae (strain MAFF 311018), this protein is Fe/S biogenesis protein NfuA.